A 506-amino-acid chain; its full sequence is Maturase K (506 aa).

It belongs to the intron maturase 2 family. MatK subfamily.

The protein resides in the plastid. The protein localises to the chloroplast. Its function is as follows. Usually encoded in the trnK tRNA gene intron. Probably assists in splicing its own and other chloroplast group II introns. In Andromeda polifolia (Bog rosemary), this protein is Maturase K.